Reading from the N-terminus, the 780-residue chain is Lethal(3)malignant brain tumor-like protein 3 (780 aa).

The tract at residues 1–64 is interaction with RBPJ. Required for transcription repressor activity on Notch target genes; sequence MTESASSTSG…VKKATATTTW (64 aa). A disordered region spans residues 149–220; sequence DKDQKEERDV…RKRRGDSAVL (72 aa). 2 stretches are compositionally biased toward acidic residues: residues 157–166 and 185–194; these read DVEEDNEEED and EDGEERDDEM. MBT repeat units lie at residues 232–332, 340–439, and 448–543; these read WCWA…LHPP, FNWQ…LITP, and FSWD…LQPP. The CCHHC-type; degenerate zinc finger occupies 549 to 593; the sequence is LMEASEHGGCSTPGCKGIGHFKRARHLGPHSAANCPYSEINLNKD. Residues 597-665 form a disordered region; sequence PDRLSGEMPP…GAREEPTVQQ (69 aa). The interval 600-710 is interaction with DCAF5; it reads LSGEMPPASP…PASKVSKWST (111 aa). Residue Ser-608 is modified to Phosphoserine. Lys-637 is covalently cross-linked (Glycyl lysine isopeptide (Lys-Gly) (interchain with G-Cter in SUMO2)). Residues 643-661 show a composition bias toward basic and acidic residues; it reads RTESEMRTSHEARGAREEP. A Glycyl lysine isopeptide (Lys-Gly) (interchain with G-Cter in SUMO2) cross-link involves residue Lys-704. Residues 708–772 enclose the SAM domain; it reads WSTDEVSEFI…FNSILMFKAA (65 aa).

As to quaternary structure, interacts with RNF2. Interacts (via SAM domain) with SAMD1 (via SAM domain); the interaction mediates L3MBTL3 binding to chromatin. Interacts with RBPJ; the interaction is required for L3MBTL3 localization to chromatin and is impaired by Notch-derived peptides containing the intracellular domain (NICD). Interacts (via SAM domain) with KDM1A. Interacts with DCAF5. Interacts with DNMT1. Interacts with E2F1. Interacts with SOX2. Interacts with SFMBT1.

It localises to the nucleus. Its function is as follows. Is a negative regulator of Notch target genes expression, required for RBPJ-mediated transcriptional repression. It recruits KDM1A to Notch-responsive elements and promotes KDM1A-mediated H3K4me demethylation. Involved in the regulation of ubiquitin-dependent degradation of a set of methylated non-histone proteins, including SOX2, DNMT1 and E2F1. It acts as an adapter recruiting the CRL4-DCAF5 E3 ubiquitin ligase complex to methylated target proteins. Required for normal maturation of myeloid progenitor cells. The chain is Lethal(3)malignant brain tumor-like protein 3 from Homo sapiens (Human).